We begin with the raw amino-acid sequence, 137 residues long: Nucleoside diphosphate kinase (137 aa).

ATP contacts are provided by Lys-9, Phe-57, Arg-85, Thr-91, Arg-102, and Asn-112. The Pros-phosphohistidine intermediate role is filled by His-115.

It belongs to the NDK family. Homotetramer. Mg(2+) serves as cofactor.

The protein resides in the cytoplasm. It catalyses the reaction a 2'-deoxyribonucleoside 5'-diphosphate + ATP = a 2'-deoxyribonucleoside 5'-triphosphate + ADP. The catalysed reaction is a ribonucleoside 5'-diphosphate + ATP = a ribonucleoside 5'-triphosphate + ADP. Its function is as follows. Major role in the synthesis of nucleoside triphosphates other than ATP. The ATP gamma phosphate is transferred to the NDP beta phosphate via a ping-pong mechanism, using a phosphorylated active-site intermediate. The protein is Nucleoside diphosphate kinase of Wolinella succinogenes (strain ATCC 29543 / DSM 1740 / CCUG 13145 / JCM 31913 / LMG 7466 / NCTC 11488 / FDC 602W) (Vibrio succinogenes).